A 335-amino-acid chain; its full sequence is Glycerol-3-phosphate dehydrogenase [NAD(P)+] (335 aa).

An NADPH-binding site is contributed by K109. K109, G141, and S143 together coordinate sn-glycerol 3-phosphate. A145 provides a ligand contact to NADPH. Residues K196, D249, S259, R260, and N261 each contribute to the sn-glycerol 3-phosphate site. K196 functions as the Proton acceptor in the catalytic mechanism. R260 provides a ligand contact to NADPH. E283 provides a ligand contact to NADPH.

The protein belongs to the NAD-dependent glycerol-3-phosphate dehydrogenase family.

The protein localises to the cytoplasm. It carries out the reaction sn-glycerol 3-phosphate + NAD(+) = dihydroxyacetone phosphate + NADH + H(+). It catalyses the reaction sn-glycerol 3-phosphate + NADP(+) = dihydroxyacetone phosphate + NADPH + H(+). Its pathway is membrane lipid metabolism; glycerophospholipid metabolism. Functionally, catalyzes the reduction of the glycolytic intermediate dihydroxyacetone phosphate (DHAP) to sn-glycerol 3-phosphate (G3P), the key precursor for phospholipid synthesis. The chain is Glycerol-3-phosphate dehydrogenase [NAD(P)+] from Mycoplasma mobile (strain ATCC 43663 / 163K / NCTC 11711) (Mesomycoplasma mobile).